Reading from the N-terminus, the 180-residue chain is MSGLTIFSDQQPEKPLWQSHNAEEIQQQLTAIGVRFERWQADCELGENPQPEAVIAAYQHEIDRLVAENGYKSWDVISMRPDNPQREALREKFLSEHTHGEDEVRFFVEGSGLFCLHLNEKVYQILCEKNDLLSVPADIPHWFDMGSAPNFTAIRVFDNPEGWIARSTGDNIADGYPRLA.

Residues His-97, His-99, Glu-103, and His-141 each coordinate Fe(2+). 4 residues coordinate Ni(2+): His-97, His-99, Glu-103, and His-141.

The protein belongs to the acireductone dioxygenase (ARD) family. In terms of assembly, monomer. It depends on Fe(2+) as a cofactor. Requires Ni(2+) as cofactor.

The enzyme catalyses 1,2-dihydroxy-5-(methylsulfanyl)pent-1-en-3-one + O2 = 3-(methylsulfanyl)propanoate + CO + formate + 2 H(+). The catalysed reaction is 1,2-dihydroxy-5-(methylsulfanyl)pent-1-en-3-one + O2 = 4-methylsulfanyl-2-oxobutanoate + formate + 2 H(+). It participates in amino-acid biosynthesis; L-methionine biosynthesis via salvage pathway; L-methionine from S-methyl-5-thio-alpha-D-ribose 1-phosphate: step 5/6. Its function is as follows. Catalyzes 2 different reactions between oxygen and the acireductone 1,2-dihydroxy-3-keto-5-methylthiopentene (DHK-MTPene) depending upon the metal bound in the active site. Fe-containing acireductone dioxygenase (Fe-ARD) produces formate and 2-keto-4-methylthiobutyrate (KMTB), the alpha-ketoacid precursor of methionine in the methionine recycle pathway. Ni-containing acireductone dioxygenase (Ni-ARD) produces methylthiopropionate, carbon monoxide and formate, and does not lie on the methionine recycle pathway. This chain is Acireductone dioxygenase, found in Yersinia pseudotuberculosis serotype O:1b (strain IP 31758).